Reading from the N-terminus, the 281-residue chain is MVLEFTKYQGLGNDFILLDNRQQTTPLVTPEQAIQLCDRHFGIGADGVIFALPGQAGADYTMRIFNSDGSEPEMCGNGIRCLARFIDHLEGGNAPGKTYSIHTLAGMIRPRLETDALVRVDMGEPILTATDIPTTLKDSNGQAVNQPLEVAGKTWMVTCVSMGNPHCITFVEDVAAIALEVIGKDFEHHPAFPQRINTEFIEVVRPDYIKMRVWERGAGITLACGTGACASVVAGVLTGHCDRLCTVELPGGCLQIEWSAADNHIYMTGPAAISFQGQVTL.

2 residues coordinate substrate: N13 and N66. The active-site Proton donor is the C75. Substrate is bound by residues 76 to 77, N164, N197, and 215 to 216; these read GN and ER. The Proton acceptor role is filled by C224. 225-226 is a substrate binding site; the sequence is GT.

It belongs to the diaminopimelate epimerase family. In terms of assembly, homodimer.

It localises to the cytoplasm. It carries out the reaction (2S,6S)-2,6-diaminopimelate = meso-2,6-diaminopimelate. It participates in amino-acid biosynthesis; L-lysine biosynthesis via DAP pathway; DL-2,6-diaminopimelate from LL-2,6-diaminopimelate: step 1/1. Its function is as follows. Catalyzes the stereoinversion of LL-2,6-diaminopimelate (L,L-DAP) to meso-diaminopimelate (meso-DAP), a precursor of L-lysine and an essential component of the bacterial peptidoglycan. The chain is Diaminopimelate epimerase from Picosynechococcus sp. (strain ATCC 27264 / PCC 7002 / PR-6) (Agmenellum quadruplicatum).